Consider the following 214-residue polypeptide: ATP phosphoribosyltransferase (214 aa).

This sequence belongs to the ATP phosphoribosyltransferase family. Short subfamily. In terms of assembly, heteromultimer composed of HisG and HisZ subunits.

Its subcellular location is the cytoplasm. The enzyme catalyses 1-(5-phospho-beta-D-ribosyl)-ATP + diphosphate = 5-phospho-alpha-D-ribose 1-diphosphate + ATP. It participates in amino-acid biosynthesis; L-histidine biosynthesis; L-histidine from 5-phospho-alpha-D-ribose 1-diphosphate: step 1/9. Catalyzes the condensation of ATP and 5-phosphoribose 1-diphosphate to form N'-(5'-phosphoribosyl)-ATP (PR-ATP). Has a crucial role in the pathway because the rate of histidine biosynthesis seems to be controlled primarily by regulation of HisG enzymatic activity. The polypeptide is ATP phosphoribosyltransferase (Azoarcus sp. (strain BH72)).